Consider the following 394-residue polypeptide: Alcohol dehydrogenase-like 3 (394 aa).

Residues cysteine 48, threonine 50, histidine 71, cysteine 101, cysteine 104, cysteine 107, cysteine 115, and cysteine 188 each contribute to the Zn(2+) site. An alcohol contacts are provided by threonine 50 and histidine 71. Threonine 50 provides a ligand contact to NAD(+). NAD(+) is bound by residues glycine 213 to glycine 218, aspartate 237, lysine 242, threonine 283, valine 306, valine 306 to isoleucine 308, phenylalanine 333, and arginine 383.

It belongs to the zinc-containing alcohol dehydrogenase family. Class-III subfamily. In terms of assembly, homodimer. It depends on Zn(2+) as a cofactor.

It localises to the cytoplasm. The catalysed reaction is a primary alcohol + NAD(+) = an aldehyde + NADH + H(+). It carries out the reaction a secondary alcohol + NAD(+) = a ketone + NADH + H(+). This is Alcohol dehydrogenase-like 3 from Arabidopsis thaliana (Mouse-ear cress).